Here is a 638-residue protein sequence, read N- to C-terminus: Plasma kallikrein (638 aa).

The first 19 residues, 1–19 (MILFKQATYFISLFATVSC), serve as a signal peptide directing secretion. 4 consecutive Apple domains span residues 21–104 (CLTQ…LKQC), 111–194 (CHRD…LKPC), 201–284 (CHMN…LLTC), and 292–375 (CHSK…LRLC). Intrachain disulfides connect C21–C104, C47–C77, C51–C57, C111–C194, C137–C166, C141–C147, C201–C284, C227–C256, C231–C237, C292–C375, C318–C347, C322–C328, C340–C345, C383–C503, C419–C435, C517–C584, C548–C563, and C574–C602. Residue N127 is glycosylated (N-linked (GlcNAc...) asparagine). A glycan (N-linked (GlcNAc...) asparagine) is linked at N308. A Peptidase S1 domain is found at 391–626 (IVGGTNSSWG…YMDWILEKTQ (236 aa)). A glycan (N-linked (GlcNAc...) asparagine) is linked at N396. The active-site Charge relay system is the H434. N-linked (GlcNAc...) asparagine glycosylation is present at N453. D483 acts as the Charge relay system in catalysis. N-linked (GlcNAc...) asparagine glycosylation is present at N494. S578 functions as the Charge relay system in the catalytic mechanism.

The protein belongs to the peptidase S1 family. Plasma kallikrein subfamily. As to quaternary structure, forms a heterodimer with SERPINA5. The zymogen is activated by factor XIIa, which cleaves the molecule into a light chain, which contains the active site, and a heavy chain, which associates with HMW kininogen. These chains are linked by one or more disulfide bonds. Interacts with iripin-3, a serine protease inhibitor from Ixodes ricinus saliva. Interacts with iripin-1, a serine protease inhibitor from Ixodes ricinus saliva. Found in plasma (at protein level).

The protein resides in the secreted. It carries out the reaction Cleaves selectively Arg-|-Xaa and Lys-|-Xaa bonds, including Lys-|-Arg and Arg-|-Ser bonds in (human) kininogen to release bradykinin.. Inhibited by SERPINA5. Functionally, participates in the surface-dependent activation of blood coagulation. Activates, in a reciprocal reaction, coagulation factor XII/F12 after binding to negatively charged surfaces. Releases bradykinin from HMW kininogen and may also play a role in the renin-angiotensin system by converting prorenin into renin. The polypeptide is Plasma kallikrein (KLKB1) (Homo sapiens (Human)).